A 240-amino-acid chain; its full sequence is Orotidine 5'-phosphate decarboxylase (240 aa).

Substrate-binding positions include aspartate 10, lysine 33, 60–69 (DLKLHDIPNT), threonine 123, arginine 185, glutamine 194, glycine 214, and arginine 215. The active-site Proton donor is the lysine 62.

The protein belongs to the OMP decarboxylase family. Type 1 subfamily. As to quaternary structure, homodimer.

The catalysed reaction is orotidine 5'-phosphate + H(+) = UMP + CO2. The protein operates within pyrimidine metabolism; UMP biosynthesis via de novo pathway; UMP from orotate: step 2/2. In terms of biological role, catalyzes the decarboxylation of orotidine 5'-monophosphate (OMP) to uridine 5'-monophosphate (UMP). This chain is Orotidine 5'-phosphate decarboxylase, found in Lactobacillus delbrueckii subsp. bulgaricus (strain ATCC 11842 / DSM 20081 / BCRC 10696 / JCM 1002 / NBRC 13953 / NCIMB 11778 / NCTC 12712 / WDCM 00102 / Lb 14).